We begin with the raw amino-acid sequence, 270 residues long: ATP synthase subunit a (270 aa).

Helical transmembrane passes span 38-58, 98-118, 143-163, 208-228, and 239-259; these read VHID…GIFY, IAPL…MDLV, DVNI…YYSI, LFGN…MLPW, and AIFH…LTIV.

Belongs to the ATPase A chain family. In terms of assembly, F-type ATPases have 2 components, CF(1) - the catalytic core - and CF(0) - the membrane proton channel. CF(1) has five subunits: alpha(3), beta(3), gamma(1), delta(1), epsilon(1). CF(0) has three main subunits: a(1), b(2) and c(9-12). The alpha and beta chains form an alternating ring which encloses part of the gamma chain. CF(1) is attached to CF(0) by a central stalk formed by the gamma and epsilon chains, while a peripheral stalk is formed by the delta and b chains.

The protein resides in the cell inner membrane. Functionally, key component of the proton channel; it plays a direct role in the translocation of protons across the membrane. The protein is ATP synthase subunit a of Vibrio parahaemolyticus serotype O3:K6 (strain RIMD 2210633).